The sequence spans 446 residues: Tubulin beta-1 chain (446 aa).

Residues glutamine 11, glutamate 69, serine 138, glycine 142, threonine 143, glycine 144, asparagine 204, and asparagine 226 each coordinate GTP. A Mg(2+)-binding site is contributed by glutamate 69. Residues 422-446 are disordered; that stretch reads YQQYQDATADEEGEYEDEEEGDLQD. The segment covering 429–446 has biased composition (acidic residues); it reads TADEEGEYEDEEEGDLQD.

Belongs to the tubulin family. In terms of assembly, dimer of alpha and beta chains. A typical microtubule is a hollow water-filled tube with an outer diameter of 25 nm and an inner diameter of 15 nM. Alpha-beta heterodimers associate head-to-tail to form protofilaments running lengthwise along the microtubule wall with the beta-tubulin subunit facing the microtubule plus end conferring a structural polarity. Microtubules usually have 13 protofilaments but different protofilament numbers can be found in some organisms and specialized cells. It depends on Mg(2+) as a cofactor. As to expression, found in areas of rapidly dividing tissues.

It is found in the cytoplasm. The protein resides in the cytoskeleton. Tubulin is the major constituent of microtubules, a cylinder consisting of laterally associated linear protofilaments composed of alpha- and beta-tubulin heterodimers. Microtubules grow by the addition of GTP-tubulin dimers to the microtubule end, where a stabilizing cap forms. Below the cap, tubulin dimers are in GDP-bound state, owing to GTPase activity of alpha-tubulin. The polypeptide is Tubulin beta-1 chain (TUBB1) (Zea mays (Maize)).